A 165-amino-acid polypeptide reads, in one-letter code: Regulator of ribonuclease activity A (165 aa).

The protein belongs to the RraA family. Homotrimer. Binds to both RNA-binding sites in the C-terminal region of Rne and to RhlB.

The protein resides in the cytoplasm. Its function is as follows. Globally modulates RNA abundance by binding to RNase E (Rne) and regulating its endonucleolytic activity. Can modulate Rne action in a substrate-dependent manner by altering the composition of the degradosome. Modulates RNA-binding and helicase activities of the degradosome. In Actinobacillus pleuropneumoniae serotype 7 (strain AP76), this protein is Regulator of ribonuclease activity A.